The sequence spans 193 residues: MATDEATKPSPIPPYPEMILAAIEGLDDKSGSNKSAISKYIEGKYGSLPPAHASLLTAHLARMKESGELVFLKNNYFRAGAPDAPPKRGRGRPPKARDPNAPAPAPKSPSSTGRGRGRPPKAKSPLEAAVKQATAGMPKPRGRPPKKAKTDGAASPSPSPAPAPAGDGSTPGKRGRGRPPKVRPAVPSETAAA.

Residues 11 to 81 form the H15 domain; that stretch reads PIPPYPEMIL…LKNNYFRAGA (71 aa). A disordered region spans residues 75 to 193; that stretch reads NYFRAGAPDA…PAVPSETAAA (119 aa). The Nuclear localization signal 1 (NLS) signature appears at 86–92; it reads PKRGRGR. 4 DNA-binding regions (a.T hook) span residues 87–98, 113–124, 138–149, and 173–184; these read KRGRGRPPKARD, GRGRGRPPKAKS, PKPRGRPPKKAK, and KRGRGRPPKVRP. Positions 145–149 match the Nuclear localization signal 2 (NLS) motif; sequence PKKAK.

This sequence belongs to the histone H1/H5 family. Phosphorylated by CDK, this phosphorylation prevents DNA-binding. Motility is increased when hypophosphorylated. Post-translationally, acetylated.

The protein localises to the nucleus. It is found in the nucleolus. Binds A/T-rich DNA (e.g. present in the storage gamma-zein gene promoter) with a highly dynamic distribution into the nucleus. Probably involved in endosperm development, during cells shift from a mitotic cycle to endoreduplication leading to massive synthesis of storage proteins (zeins) and starch. This chain is HMG-Y-related protein A, found in Zea mays (Maize).